Consider the following 175-residue polypeptide: Large ribosomal subunit protein uL10 (175 aa).

This sequence belongs to the universal ribosomal protein uL10 family. As to quaternary structure, part of the ribosomal stalk of the 50S ribosomal subunit. The N-terminus interacts with L11 and the large rRNA to form the base of the stalk. The C-terminus forms an elongated spine to which L12 dimers bind in a sequential fashion forming a multimeric L10(L12)X complex.

Functionally, forms part of the ribosomal stalk, playing a central role in the interaction of the ribosome with GTP-bound translation factors. The chain is Large ribosomal subunit protein uL10 from Psychrobacter sp. (strain PRwf-1).